Reading from the N-terminus, the 236-residue chain is Thymidylate kinase (236 aa).

9-16 serves as a coordination point for ATP; sequence GPEGSGKS.

This sequence belongs to the thymidylate kinase family.

It carries out the reaction dTMP + ATP = dTDP + ADP. Its function is as follows. Phosphorylation of dTMP to form dTDP in both de novo and salvage pathways of dTTP synthesis. The polypeptide is Thymidylate kinase (Herpetosiphon aurantiacus (strain ATCC 23779 / DSM 785 / 114-95)).